Consider the following 128-residue polypeptide: Sulfurtransferase TusD (128 aa).

Residue Cys78 is the Cysteine persulfide intermediate of the active site.

This sequence belongs to the DsrE/TusD family. Heterohexamer, formed by a dimer of trimers. The hexameric TusBCD complex contains 2 copies each of TusB, TusC and TusD. The TusBCD complex interacts with TusE.

It is found in the cytoplasm. Part of a sulfur-relay system required for 2-thiolation of 5-methylaminomethyl-2-thiouridine (mnm(5)s(2)U) at tRNA wobble positions. Accepts sulfur from TusA and transfers it in turn to TusE. This chain is Sulfurtransferase TusD, found in Escherichia coli O7:K1 (strain IAI39 / ExPEC).